Consider the following 291-residue polypeptide: Nucleotide-binding protein PPA0813 (291 aa).

Residue 17–24 participates in ATP binding; the sequence is GISGAGRR. 66-69 is a binding site for GTP; the sequence is DVRS.

Belongs to the RapZ-like family.

Displays ATPase and GTPase activities. The protein is Nucleotide-binding protein PPA0813 of Cutibacterium acnes (strain DSM 16379 / KPA171202) (Propionibacterium acnes).